The sequence spans 710 residues: MKKTFKLILVLMLSLTLVFGLTAPIQAASDTAVSNVVNYSTDVIYQIVTDRFVDGNTSNNPTGDLYDPTHTSLKKYFGGDWQGIINKINDGYLTGMGVTAIWISQPVENIYAVLPDSTFGGSTSYHGYWARDFKRTNPYFGSFTDFQNLINTAHAHNIKVIIDFAPNHTSPASETDPTYAENGRLYDNGTLLGGYTNDTNGYFHHYGGTDFSSYEDGIYRNLFDLADLNQQNSTIDSYLKSAIKVWLDMGIDGIRLDAVKHMPFGWQKNFMDSILSYRPVFTFGEWFLGTNEIDVNNTYFANESGMSLLDFRFSQKVRQVFRDNTDTMYGLDSMIQSTASDYNFINDMVTFIDNHDMDRFYNGGSTRPVEQALAFTLTSRGVPAIYYGTEQYMTGNGDPYNRAMMTSFNTSTTAYNVIKKLAPLRKSNPAIAYGTTQQRWINNDVYIYERKFGNNVALVAINRNLSTSYNITGLYTALPAGTYTDVLGGLLNGNSISVASDGSVTPFTLSAGEVAVWQYVSSSNSPLIGHVGPTMTKAGQTITIDGRGFGTTSGQVLFGSTAGTIVSWDDTEVKVKVPSVTPGKYNISLKTSSGATSNTYNNINILTGNQICVRFVVNNASTVYGENVYLTGNVAELGNWDTSKAIGPMFNQVVYQYPTWYYDVSVPAGTTIQFKFIKKNGNTITWEGGSNHTYTVPSSSTGTVIVNWQQ.

Positions 1–27 (MKKTFKLILVLMLSLTLVFGLTAPIQA) are cleaved as a signal peptide. Ca(2+) is bound by residues Asp54, Asn56, Asn59, Asn60, Gly78, and Asp80. Position 128-129 (128-129 (YW)) interacts with substrate. Asn167 lines the Ca(2+) pocket. His168 is a substrate binding site. Residue Ile218 coordinates Ca(2+). 221 to 224 (NLFD) is a substrate binding site. Asp227 provides a ligand contact to Ca(2+). Arg255 serves as a coordination point for substrate. Asp257 (nucleophile) is an active-site residue. 260-261 (KH) is a substrate binding site. Residue His261 coordinates Ca(2+). Residue Glu285 is the Proton donor of the active site. Substrate is bound by residues His355, Asp398, and Arg402. Positions 526–603 (PLIGHVGPTM…GATSNTYNNI (78 aa)) constitute an IPT/TIG domain. The CBM20 domain maps to 605–710 (ILTGNQICVR…TGTVIVNWQQ (106 aa)).

It belongs to the glycosyl hydrolase 13 family. Ca(2+) is required as a cofactor.

It localises to the secreted. It catalyses the reaction Cyclizes part of a (1-&gt;4)-alpha-D-glucan chain by formation of a (1-&gt;4)-alpha-D-glucosidic bond.. Functionally, degrades starch to alpha-, beta-, and gamma-cyclodextrins, as well as linear sugars. The protein is Cyclomaltodextrin glucanotransferase (amyA) of Thermoanaerobacterium thermosulfurigenes (Clostridium thermosulfurogenes).